A 470-amino-acid polypeptide reads, in one-letter code: 5-hydroxytryptamine receptor 2A (470 aa).

Topologically, residues 1–80 (MDILCEENTS…LQEKNWSALL (80 aa)) are extracellular. The N-linked (GlcNAc...) asparagine glycan is linked to Asn-38. A helical membrane pass occupies residues 81–97 (TAVVIILTIAGNILVIM). Topologically, residues 98-111 (AVSLEKKLQNATNY) are cytoplasmic. Residues 112–137 (FLMSLAIADMLLGFLVMPVSTLTILY) form a helical membrane-spanning segment. Residues 138 to 146 (GYRWPLPSK) lie on the Extracellular side of the membrane. Residues 147-171 (LCAVWIYLDVLFSTASIMHLCAISL) traverse the membrane as a helical segment. Residues Cys-148 and Cys-227 are joined by a disulfide bond. Asp-155 serves as a coordination point for serotonin. Positions 172 to 174 (DRY) match the DRY motif; important for ligand-induced conformation changes motif. Topologically, residues 172 to 191 (DRYVAIQNPIHHSRFNSRTK) are cytoplasmic. A helical transmembrane segment spans residues 192-215 (AFLKIIAVWTISVGISMPIPVFGL). Over 216–232 (QDDSKVFKEGSCLLADE) the chain is Extracellular. Residues 233–258 (NFVLIGSFVAFFIPLTIMVITYFLTI) traverse the membrane as a helical segment. Residues 259-321 (KSLQKEATLC…QSISNEQKAC (63 aa)) are Cytoplasmic-facing. Residue Ser-280 is modified to Phosphoserine. A helical membrane pass occupies residues 322-347 (KVLGIVFFLFVVMWCPFFITNIMAVI). Asn-342 is a binding site for serotonin. Residues Cys-348 and Cys-352 are joined by a disulfide bond. Over 348 to 355 (CKESCNRD) the chain is Extracellular. The chain crosses the membrane as a helical span at residues 356–381 (VIEALLNVFVWIGYLSSAVNPLVYTL). The NPxxY motif; important for ligand-induced conformation changes and signaling signature appears at 375–379 (NPLVY). Residues 382 to 470 (FNKTYRSAFS…NTVNEKVSCV (89 aa)) are Cytoplasmic-facing. Positions 424–470 (QMGPKKNSKKDDKTTDNDCTMVALGKEHPEDAPADSSNTVNEKVSCV) are disordered. The span at 458-470 (DSSNTVNEKVSCV) shows a compositional bias: polar residues. The PDZ-binding motif lies at 468 to 470 (SCV).

Belongs to the G-protein coupled receptor 1 family. In terms of assembly, interacts (via C-terminus) with MPDZ and PATJ. May interact (via C-terminus) with MPP3, PRDX6, DLG4, DLG1, CASK, APBA1 and MAGI2. Interacts with GRM2 and DRD2; this may affect signaling.

It localises to the cell membrane. Its subcellular location is the cell projection. It is found in the dendrite. The protein resides in the axon. The protein localises to the cytoplasmic vesicle. It localises to the membrane. Its subcellular location is the caveola. It is found in the presynapse. G-protein coupled receptor activity is regulated by lipids: oleamide increases HTR2A-mediated activity. G-protein coupled receptor for 5-hydroxytryptamine (serotonin). Also functions as a receptor for various drugs and psychoactive substances, including mescaline, psilocybin, 1-(2,5-dimethoxy-4-iodophenyl)-2-aminopropane (DOI) and lysergic acid diethylamide (LSD). Ligand binding causes a conformation change that triggers signaling via guanine nucleotide-binding proteins (G proteins) and modulates the activity of downstream effectors. HTR2A is coupled to G(q)/G(11) G alpha proteins and activates phospholipase C-beta, releasing diacylglycerol (DAG) and inositol 1,4,5-trisphosphate (IP3) second messengers that modulate the activity of phosphatidylinositol 3-kinase and promote the release of Ca(2+) ions from intracellular stores, respectively. Beta-arrestin family members inhibit signaling via G proteins and mediate activation of alternative signaling pathways. Affects neural activity, perception, cognition and mood. Plays a role in the regulation of behavior, including responses to anxiogenic situations and psychoactive substances. Plays a role in intestinal smooth muscle contraction, and may play a role in arterial vasoconstriction. This Bos taurus (Bovine) protein is 5-hydroxytryptamine receptor 2A (HTR2A).